The primary structure comprises 467 residues: UDP-N-acetylmuramate--L-alanine ligase (467 aa).

ATP is bound at residue 114–120 (GTHGKTT).

It belongs to the MurCDEF family.

The protein localises to the cytoplasm. The catalysed reaction is UDP-N-acetyl-alpha-D-muramate + L-alanine + ATP = UDP-N-acetyl-alpha-D-muramoyl-L-alanine + ADP + phosphate + H(+). Its pathway is cell wall biogenesis; peptidoglycan biosynthesis. Cell wall formation. This is UDP-N-acetylmuramate--L-alanine ligase from Chlorobium chlorochromatii (strain CaD3).